The following is a 53-amino-acid chain: uncharacterized protein (53 aa).

This is an uncharacterized protein from Thermoproteus tenax (TTV1).